The sequence spans 498 residues: Cytochrome P450 monooxygenase 110 (498 aa).

The helical transmembrane segment at 7 to 24 (YVFALLGILATLYFVRWS) threads the bilayer. Asn425 is a glycosylation site (N-linked (GlcNAc...) asparagine). Cys440 contacts heme.

It belongs to the cytochrome P450 family. It depends on heme as a cofactor.

The protein resides in the membrane. The protein operates within secondary metabolite biosynthesis. In terms of biological role, cytochrome P450 monooxygenase that is able to use dehydroabietic acid and testosterone as substrates for oxidation, suggesting that the natural substrate(s) may be structurally related to steroid compounds. This is Cytochrome P450 monooxygenase 110 from Postia placenta (strain ATCC 44394 / Madison 698-R) (Brown rot fungus).